The following is a 126-amino-acid chain: Scygonadin (126 aa).

The signal sequence occupies residues 1–24; sequence MRSSLLLGLTVVVLLGVIVPPCMA.

In terms of tissue distribution, expressed in the ejaculatory ducts of mature males. Not detected in the ejaculatory ducts of immature males. Not detected in hepatopancreas, female reproductive tract, eyes, exoskeleton, subcuticular epithelia, heart, gills, stomach, muscle and hemocytes.

It localises to the secreted. In terms of biological role, has antibacterial activity against the Gram-positive bacterium M.luteus with an IC(90) of 125ug/ml. Has weak antibacterial activity against the Gram-negative bacterium A.hydrophila. The protein is Scygonadin of Scylla serrata (Mud crab).